Consider the following 130-residue polypeptide: Small ribosomal subunit protein uS11 (130 aa).

This sequence belongs to the universal ribosomal protein uS11 family. In terms of assembly, part of the 30S ribosomal subunit. Interacts with proteins S7 and S18. Binds to IF-3.

In terms of biological role, located on the platform of the 30S subunit, it bridges several disparate RNA helices of the 16S rRNA. Forms part of the Shine-Dalgarno cleft in the 70S ribosome. The polypeptide is Small ribosomal subunit protein uS11 (Parasynechococcus marenigrum (strain WH8102)).